A 633-amino-acid polypeptide reads, in one-letter code: Probable potassium transport system protein Kup (633 aa).

Transmembrane regions (helical) follow at residues L21–F41, L61–L81, T107–I127, P145–I165, F176–I196, G219–L239, W255–L275, A293–I313, I345–F365, L371–F391, L402–A422, and I427–T447.

Belongs to the HAK/KUP transporter (TC 2.A.72) family.

It is found in the cell inner membrane. The enzyme catalyses K(+)(in) + H(+)(in) = K(+)(out) + H(+)(out). Transport of potassium into the cell. Likely operates as a K(+):H(+) symporter. This is Probable potassium transport system protein Kup from Rhizobium rhizogenes (strain K84 / ATCC BAA-868) (Agrobacterium radiobacter).